A 786-amino-acid chain; its full sequence is Polyribonucleotide nucleotidyltransferase (786 aa).

Asp-516 and Asp-522 together coordinate Mg(2+). The region spanning 582 to 641 is the KH domain; that stretch reads PRVTTVKIPVDKIGMVIGPKGQTINAIQDETGAEISIEDDGTIYVGATNGPSAQAAVERV. In terms of domain architecture, S1 motif spans 653–722; that stretch reads GDRFLGTVVK…QRGKIYLDKV (70 aa). The interval 722–786 is disordered; sequence VRPEGAEGPA…SRPRRRTRHS (65 aa). Residues 727–738 are compositionally biased toward low complexity; the sequence is AEGPAEAAATDR. Positions 739–778 are enriched in basic and acidic residues; sequence PAGRDRGDRAPRDRGDRGDRERGSRGPDRGDGGEGGGESR.

It belongs to the polyribonucleotide nucleotidyltransferase family. Mg(2+) serves as cofactor.

It is found in the cytoplasm. The enzyme catalyses RNA(n+1) + phosphate = RNA(n) + a ribonucleoside 5'-diphosphate. Involved in mRNA degradation. Catalyzes the phosphorolysis of single-stranded polyribonucleotides processively in the 3'- to 5'-direction. This is Polyribonucleotide nucleotidyltransferase from Salinispora arenicola (strain CNS-205).